A 145-amino-acid polypeptide reads, in one-letter code: Transcription antitermination protein NusB (145 aa).

Belongs to the NusB family.

Involved in transcription antitermination. Required for transcription of ribosomal RNA (rRNA) genes. Binds specifically to the boxA antiterminator sequence of the ribosomal RNA (rrn) operons. In Burkholderia ambifaria (strain MC40-6), this protein is Transcription antitermination protein NusB.